Reading from the N-terminus, the 392-residue chain is Norsolorinic acid reductase B (392 aa).

Residue Asp-75 coordinates NADP(+). Residue Tyr-80 is the Proton donor of the active site. Residues 184 to 185, Gln-210, 239 to 249, and 311 to 319 contribute to the NADP(+) site; these read SD, GTLGQGSFQTE, and RKLEHIQGN. The segment at 242-263 is disordered; that stretch reads GQGSFQTEEGRKQREKDNPGRK. Residues 249-261 are compositionally biased toward basic and acidic residues; the sequence is EEGRKQREKDNPG.

This sequence belongs to the aldo/keto reductase family. Aldo/keto reductase 2 subfamily.

It functions in the pathway mycotoxin biosynthesis. In terms of biological role, norsolorinic acid reductase; part of the fragmented gene cluster that mediates the biosynthesis of dothistromin (DOTH), a polyketide toxin very similar in structure to the aflatoxin precursor, versicolorin B. The first step of the pathway is the conversion of acetate to norsolorinic acid (NOR) and requires the fatty acid synthase subunits hexA and hexB, as well as the polyketide synthase pksA. PksA combines a hexanoyl starter unit and 7 malonyl-CoA extender units to synthesize the precursor NOR. The hexanoyl starter unit is provided to the acyl-carrier protein (ACP) domain by the fungal fatty acid synthase hexA/hexB. The second step is the conversion of NOR to averantin (AVN) and requires the norsolorinic acid ketoreductase nor1, which catalyzes the dehydration of norsolorinic acid to form (1'S)-averantin. The cytochrome P450 monooxygenase avnA then catalyzes the hydroxylation of AVN to 5'hydroxyaverantin (HAVN). The next step is performed by adhA that transforms HAVN to averufin (AVF). Averufin might then be converted to hydroxyversicolorone by cypX and avfA. Hydroxyversicolorone is further converted versiconal hemiacetal acetate (VHA) by moxY. VHA is then the substrate for the versiconal hemiacetal acetate esterase est1 to yield versiconal (VAL). Versicolorin B synthase vbsA then converts VAL to versicolorin B (VERB) by closing the bisfuran ring. Then, the activity of the versicolorin B desaturase verB leads to versicolorin A (VERA). DotB, a predicted chloroperoxidase, may perform epoxidation of the A-ring of VERA. Alternatively, a cytochrome P450, such as cypX or avnA could catalyze this step. It is also possible that another, uncharacterized, cytochrome P450 enzyme is responsible for this step. Opening of the epoxide could potentially be achieved by the epoxide hydrolase epoA. However, epoA seems not to be required for DOTH biosynthesis, but other epoxide hydrolases may have the ability to complement this hydrolysis. Alternatively, opening of the epoxide ring could be achieved non-enzymatically. The next step is the deoxygenation of ring A to yield the 5,8-dihydroxyanthraquinone which is most likely catalyzed by the NADPH dehydrogenase encoded by ver1. The last stages of DOTH biosynthesis are proposed to involve hydroxylation of the bisfuran. OrdB and norB might have oxidative roles here. An alternative possibility is that cytochrome P450 monoogenases such as avnA and cypX might perform these steps in addition to previously proposed steps. This chain is Norsolorinic acid reductase B, found in Dothistroma septosporum (strain NZE10 / CBS 128990) (Red band needle blight fungus).